Consider the following 351-residue polypeptide: Minor outer capsid protein P9 (351 aa).

Disordered stretches follow at residues 245–281 and 288–307; these read GGVP…DQPE and KKVD…GNVS. The segment covering 288 to 297 has biased composition (basic and acidic residues); sequence KKVDASKDAP.

Belongs to the phytoreovirus minor outer capsid protein P9 family.

It localises to the virion. Its subcellular location is the host cytoplasm. Minor outer capsid protein. This chain is Minor outer capsid protein P9, found in Rice dwarf virus (RDV).